Consider the following 201-residue polypeptide: FMN-dependent NADH:quinone oxidoreductase (201 aa).

FMN contacts are provided by residues S10, 16–18 (SQS), 96–99 (MYNF), and 140–143 (SRGG).

This sequence belongs to the azoreductase type 1 family. In terms of assembly, homodimer. The cofactor is FMN.

It carries out the reaction 2 a quinone + NADH + H(+) = 2 a 1,4-benzosemiquinone + NAD(+). It catalyses the reaction N,N-dimethyl-1,4-phenylenediamine + anthranilate + 2 NAD(+) = 2-(4-dimethylaminophenyl)diazenylbenzoate + 2 NADH + 2 H(+). Its function is as follows. Quinone reductase that provides resistance to thiol-specific stress caused by electrophilic quinones. In terms of biological role, also exhibits azoreductase activity. Catalyzes the reductive cleavage of the azo bond in aromatic azo compounds to the corresponding amines. This is FMN-dependent NADH:quinone oxidoreductase from Yersinia enterocolitica serotype O:8 / biotype 1B (strain NCTC 13174 / 8081).